Consider the following 847-residue polypeptide: Ras GTPase-activating protein 2 (847 aa).

Residues 1 to 18 (MAAAAPAAAALTEAPAVP) show a composition bias toward low complexity. Positions 1–31 (MAAAAPAAAALTEAPAVPGTAEPETGDEDSR) are disordered. Ala-2 is modified (N-acetylalanine). C2 domains follow at residues 19-137 (GTAE…ETWF) and 148-288 (VQGK…QAWY). Positions 371-588 (NKLVPFITAV…TDVKKFLDEI (218 aa)) constitute a Ras-GAP domain. Position 554 is a phosphoserine (Ser-554). One can recognise a PH domain in the interval 603-704 (VHLKEGEMYK…WIDMLCRVSR (102 aa)). The Btk-type zinc-finger motif lies at 706–742 (NHNRLSSFHPSAYLNGNWLCCQETSEGTPGCKPCTAG). Zn(2+) contacts are provided by His-714, Cys-725, Cys-726, and Cys-736. A disordered region spans residues 819-847 (DEPHEKYRKKRSSSAKYGSKENPIVGKIS).

Widely expressed. Higher expression in brain, placenta, and kidney.

The protein localises to the cell membrane. Functionally, inhibitory regulator of the Ras-cyclic AMP pathway. May bind inositol tetrakisphosphate (IP4) and phospholipids. In Rattus norvegicus (Rat), this protein is Ras GTPase-activating protein 2 (Rasa2).